The sequence spans 456 residues: MENFSEWYHNILETAGIYDLRYPLKGCGVYLPYGFKIRRYAFEAIRDMLDESNHDEALFPMLIPEDLLAKEGEHIKGFEEEVYWVTHGGTTPLDVKLALRPTSETPIYHMMKLWIKVHTDLPIKIYQIVNSFRYETKHTRPLIRLREIMTFKEAHTAHSTSEEAEAQVQTALNIYKTFFDRMGVPTIVSQRPEWDKFPGADYTMAFDTIFPDGKTMQIGTVHNLGQHFAKTFELEFETPEGGKDYAYQTCYGISDRIIASIIALHGDEKGLILPPEVAPHQIIIIPLLFKGKEEIAMNKAKEIYKSLKNTYRVKLDDRDIRPGKKFNDWELKGAPIRIELGPRDIENNKLTIYRRDTGEKFQIDEDNLLNELNTLIDSIENTIKEKAEQKVKSFITILDNHDVNNIKETLSTKKGVVLVPYDENIYTEEFEEEIDASVLGTTEYDGKKYISIAKTY.

The protein belongs to the class-II aminoacyl-tRNA synthetase family. ProS type 3 subfamily. As to quaternary structure, homodimer.

It localises to the cytoplasm. The catalysed reaction is tRNA(Pro) + L-proline + ATP = L-prolyl-tRNA(Pro) + AMP + diphosphate. Functionally, catalyzes the attachment of proline to tRNA(Pro) in a two-step reaction: proline is first activated by ATP to form Pro-AMP and then transferred to the acceptor end of tRNA(Pro). This Methanococcus aeolicus (strain ATCC BAA-1280 / DSM 17508 / OCM 812 / Nankai-3) protein is Proline--tRNA ligase.